Consider the following 206-residue polypeptide: Large ribosomal subunit protein uL4 (206 aa).

The span at 42–54 shows a compositional bias: polar residues; the sequence is RRQQGTHQSQGRS. The disordered stretch occupies residues 42 to 94; the sequence is RRQQGTHQSQGRSDVSRTGAKMFKQKGTGRARHSSARAPQFRGGGKAHGPVFR. A compositionally biased stretch (basic residues) spans 64-76; it reads FKQKGTGRARHSS.

Belongs to the universal ribosomal protein uL4 family. Part of the 50S ribosomal subunit.

One of the primary rRNA binding proteins, this protein initially binds near the 5'-end of the 23S rRNA. It is important during the early stages of 50S assembly. It makes multiple contacts with different domains of the 23S rRNA in the assembled 50S subunit and ribosome. In terms of biological role, forms part of the polypeptide exit tunnel. In Bartonella tribocorum (strain CIP 105476 / IBS 506), this protein is Large ribosomal subunit protein uL4.